A 668-amino-acid chain; its full sequence is Protein brown (668 aa).

Over 1–412 (MPMDEGDAQG…TEDLANIRSG (412 aa)) the chain is Cytoplasmic. In terms of domain architecture, ABC transporter spans 31–328 (YSFWNECRKQ…FTEGFMQPKN (298 aa)). 63–70 (GGSGAGKT) is an ATP binding site. The chain crosses the membrane as a helical span at residues 413-433 (LIGFGFFMTTAVTLSLMYSGV). Over 434–453 (GGLTQRTVQDVGGSIFMLSN) the chain is Extracellular. Residues 454 to 474 (EMIFTFSYGVTYIFPAALPII) traverse the membrane as a helical segment. Residues 475–490 (RREVAEGTYSLSAYYV) are Cytoplasmic-facing. The chain crosses the membrane as a helical span at residues 491-511 (ALVLSFVPVAFFKGYMFLSVI). Topologically, residues 512–524 (YASIYYTRGFLLY) are extracellular. Residues 525–545 (ITMGFLMSLSAIAAVGYGVFL) form a helical membrane-spanning segment. At 546–561 (SSLFETDKMASECAAP) the chain is on the cytoplasmic side. The chain crosses the membrane as a helical span at residues 562 to 582 (FDLIFLIFGGTYMNVDSVPLL). Residues 583–637 (KYFSLFFYSNEALMYNFWIDIDNIACXVNDEHPCCQTGLEVLQQASFRTADYTFW) lie on the Extracellular side of the membrane. Residues 638–658 (LDCASLLVVALVFHIVSFTLI) form a helical membrane-spanning segment. The Cytoplasmic portion of the chain corresponds to 659–668 (RRYINRSGYY).

Belongs to the ABC transporter superfamily. ABCG family. Eye pigment precursor importer (TC 3.A.1.204) subfamily. May form a heterodimer with w/white. In terms of tissue distribution, expressed in eyes.

The protein resides in the membrane. The enzyme catalyses guanine(out) + ATP + H2O = guanine(in) + ADP + phosphate + H(+). It catalyses the reaction riboflavin(in) + ATP + H2O = riboflavin(out) + ADP + phosphate + H(+). It carries out the reaction (6S)-5,6,7,8-tetrahydrofolate(out) + ATP + H2O = (6S)-5,6,7,8-tetrahydrofolate(in) + ADP + phosphate + H(+). ATP-dependent transporter of the ATP-binding cassette (ABC) family which transports various molecules including bioamines, neurotransmitters and metabolic intermediates. In the eye and probably in association with w/white, required for the transport of the eye red pigment precursor, guanine, into pigment cell granules. In Malpighian tubules, involved in guanine uptake. Probably in association with w/white, involved in aging-induced intestinal stem cell proliferation in the midgut by regulating tetrahydrofolate transport. This is Protein brown from Drosophila virilis (Fruit fly).